Here is a 149-residue protein sequence, read N- to C-terminus: Nucleoside diphosphate kinase (149 aa).

ATP is bound by residues K9, F57, R85, T91, R102, and N112. The Pros-phosphohistidine intermediate role is filled by H115.

It belongs to the NDK family. Homotetramer. Mg(2+) serves as cofactor.

Its subcellular location is the cytoplasm. It catalyses the reaction a 2'-deoxyribonucleoside 5'-diphosphate + ATP = a 2'-deoxyribonucleoside 5'-triphosphate + ADP. It carries out the reaction a ribonucleoside 5'-diphosphate + ATP = a ribonucleoside 5'-triphosphate + ADP. Its function is as follows. Major role in the synthesis of nucleoside triphosphates other than ATP. The ATP gamma phosphate is transferred to the NDP beta phosphate via a ping-pong mechanism, using a phosphorylated active-site intermediate. The polypeptide is Nucleoside diphosphate kinase (Synechocystis sp. (strain ATCC 27184 / PCC 6803 / Kazusa)).